The primary structure comprises 331 residues: Phenylalanine--tRNA ligase alpha subunit (331 aa).

Glu252 lines the Mg(2+) pocket.

This sequence belongs to the class-II aminoacyl-tRNA synthetase family. Phe-tRNA synthetase alpha subunit type 1 subfamily. Tetramer of two alpha and two beta subunits. Requires Mg(2+) as cofactor.

It is found in the cytoplasm. The catalysed reaction is tRNA(Phe) + L-phenylalanine + ATP = L-phenylalanyl-tRNA(Phe) + AMP + diphosphate + H(+). The polypeptide is Phenylalanine--tRNA ligase alpha subunit (Hahella chejuensis (strain KCTC 2396)).